A 100-amino-acid polypeptide reads, in one-letter code: NADH-quinone oxidoreductase subunit K 1 (100 aa).

Helical transmembrane passes span 4–24, 29–49, and 60–80; these read LNNYLIISAILFSIGTIGVLV, IVIFMCVEMMLNAVNLTFIAF, and IFVFFVMTVAAAEAAVGLALM.

It belongs to the complex I subunit 4L family. As to quaternary structure, NDH-1 is composed of 14 different subunits. Subunits NuoA, H, J, K, L, M, N constitute the membrane sector of the complex.

It localises to the cell inner membrane. The catalysed reaction is a quinone + NADH + 5 H(+)(in) = a quinol + NAD(+) + 4 H(+)(out). NDH-1 shuttles electrons from NADH, via FMN and iron-sulfur (Fe-S) centers, to quinones in the respiratory chain. The immediate electron acceptor for the enzyme in this species is believed to be ubiquinone. Couples the redox reaction to proton translocation (for every two electrons transferred, four hydrogen ions are translocated across the cytoplasmic membrane), and thus conserves the redox energy in a proton gradient. The chain is NADH-quinone oxidoreductase subunit K 1 from Geotalea daltonii (strain DSM 22248 / JCM 15807 / FRC-32) (Geobacter daltonii).